Reading from the N-terminus, the 353-residue chain is Basic membrane protein C (353 aa).

Residues 1–16 (MFKRFIFITLSLLVFA) form the signal peptide. Residue cysteine 17 is the site of N-palmitoyl cysteine attachment. Cysteine 17 carries S-diacylglycerol cysteine lipidation.

It belongs to the BMP lipoprotein family. Monomer.

It localises to the cell inner membrane. May be part of an ABC-type nucleoside uptake system involved in the purine salvage pathway. This Borreliella burgdorferi (strain N40) (Borrelia burgdorferi) protein is Basic membrane protein C (bmpC).